The following is a 309-amino-acid chain: Ornithine carbamoyltransferase (309 aa).

Residues 51 to 54 (STRT), glutamine 78, arginine 102, and 129 to 132 (HPCQ) contribute to the carbamoyl phosphate site. L-ornithine is bound by residues asparagine 161, aspartate 225, and 229-230 (SM). Carbamoyl phosphate contacts are provided by residues 265 to 266 (CL) and arginine 293.

This sequence belongs to the aspartate/ornithine carbamoyltransferase superfamily. OTCase family.

It localises to the cytoplasm. The enzyme catalyses carbamoyl phosphate + L-ornithine = L-citrulline + phosphate + H(+). It functions in the pathway amino-acid biosynthesis; L-arginine biosynthesis; L-arginine from L-ornithine and carbamoyl phosphate: step 1/3. Its function is as follows. Reversibly catalyzes the transfer of the carbamoyl group from carbamoyl phosphate (CP) to the N(epsilon) atom of ornithine (ORN) to produce L-citrulline. In Mycolicibacterium paratuberculosis (strain ATCC BAA-968 / K-10) (Mycobacterium paratuberculosis), this protein is Ornithine carbamoyltransferase.